A 100-amino-acid chain; its full sequence is Large ribosomal subunit protein mL53 (100 aa).

This sequence belongs to the mitochondrion-specific ribosomal protein mL53 family. As to quaternary structure, component of the mitochondrial large ribosomal subunit (mt-LSU). Mature yeast 74S mitochondrial ribosomes consist of a small (37S) and a large (54S) subunit. The 37S small subunit contains a 15S ribosomal RNA (15S mt-rRNA) and at least 32 different proteins. The 54S large subunit contains a 21S rRNA (21S mt-rRNA) and at least 45 different proteins.

It localises to the mitochondrion. In terms of biological role, component of the mitochondrial ribosome (mitoribosome), a dedicated translation machinery responsible for the synthesis of mitochondrial genome-encoded proteins, including at least some of the essential transmembrane subunits of the mitochondrial respiratory chain. The mitoribosomes are attached to the mitochondrial inner membrane and translation products are cotranslationally integrated into the membrane. This chain is Large ribosomal subunit protein mL53 (mrpl44), found in Schizosaccharomyces pombe (strain 972 / ATCC 24843) (Fission yeast).